Reading from the N-terminus, the 336-residue chain is Fructose-1,6-bisphosphatase class 1 (336 aa).

The Mg(2+) site is built by E90, D112, L114, and D115. Substrate-binding positions include 115 to 118 (DGSS), N211, and K277. Residue E283 coordinates Mg(2+).

Belongs to the FBPase class 1 family. In terms of assembly, homotetramer. It depends on Mg(2+) as a cofactor.

It is found in the cytoplasm. The enzyme catalyses beta-D-fructose 1,6-bisphosphate + H2O = beta-D-fructose 6-phosphate + phosphate. The protein operates within carbohydrate biosynthesis; gluconeogenesis. The protein is Fructose-1,6-bisphosphatase class 1 of Pseudomonas syringae pv. syringae (strain B728a).